The following is a 152-amino-acid chain: Small ribosomal subunit protein bS6 (152 aa).

A disordered region spans residues 96-152; that stretch reads HEEGPSAMLQKRDRDDRGERGDRGDRGDRGDRGFGGREDRPRRPRPTEESHGGEEEV.

It belongs to the bacterial ribosomal protein bS6 family.

Binds together with bS18 to 16S ribosomal RNA. In Xanthobacter autotrophicus (strain ATCC BAA-1158 / Py2), this protein is Small ribosomal subunit protein bS6.